A 176-amino-acid polypeptide reads, in one-letter code: ATP-dependent protease subunit HslV (176 aa).

Residue Thr-2 is part of the active site. Gly-157, Cys-160, and Thr-163 together coordinate Na(+).

The protein belongs to the peptidase T1B family. HslV subfamily. As to quaternary structure, a double ring-shaped homohexamer of HslV is capped on each side by a ring-shaped HslU homohexamer. The assembly of the HslU/HslV complex is dependent on binding of ATP.

It localises to the cytoplasm. The catalysed reaction is ATP-dependent cleavage of peptide bonds with broad specificity.. Its activity is regulated as follows. Allosterically activated by HslU binding. Functionally, protease subunit of a proteasome-like degradation complex believed to be a general protein degrading machinery. In Salmonella agona (strain SL483), this protein is ATP-dependent protease subunit HslV.